The primary structure comprises 203 residues: Large ribosomal subunit protein bL25 (203 aa).

It belongs to the bacterial ribosomal protein bL25 family. CTC subfamily. As to quaternary structure, part of the 50S ribosomal subunit; part of the 5S rRNA/L5/L18/L25 subcomplex. Contacts the 5S rRNA. Binds to the 5S rRNA independently of L5 and L18.

In terms of biological role, this is one of the proteins that binds to the 5S RNA in the ribosome where it forms part of the central protuberance. The sequence is that of Large ribosomal subunit protein bL25 from Pseudomonas savastanoi pv. phaseolicola (strain 1448A / Race 6) (Pseudomonas syringae pv. phaseolicola (strain 1448A / Race 6)).